Reading from the N-terminus, the 269-residue chain is Formamidopyrimidine-DNA glycosylase (269 aa).

The Schiff-base intermediate with DNA role is filled by Pro2. Residue Glu3 is the Proton donor of the active site. Lys57 serves as the catalytic Proton donor; for beta-elimination activity. DNA contacts are provided by His90, Arg109, and Lys150. The FPG-type zinc finger occupies 235-269; sequence QVYGRKGEPCRVCGTPIVATKHAQRATFYCRHCQK. Residue Arg259 is the Proton donor; for delta-elimination activity of the active site.

This sequence belongs to the FPG family. In terms of assembly, monomer. Zn(2+) is required as a cofactor.

The enzyme catalyses Hydrolysis of DNA containing ring-opened 7-methylguanine residues, releasing 2,6-diamino-4-hydroxy-5-(N-methyl)formamidopyrimidine.. It carries out the reaction 2'-deoxyribonucleotide-(2'-deoxyribose 5'-phosphate)-2'-deoxyribonucleotide-DNA = a 3'-end 2'-deoxyribonucleotide-(2,3-dehydro-2,3-deoxyribose 5'-phosphate)-DNA + a 5'-end 5'-phospho-2'-deoxyribonucleoside-DNA + H(+). Its function is as follows. Involved in base excision repair of DNA damaged by oxidation or by mutagenic agents. Acts as a DNA glycosylase that recognizes and removes damaged bases. Has a preference for oxidized purines, such as 7,8-dihydro-8-oxoguanine (8-oxoG). Has AP (apurinic/apyrimidinic) lyase activity and introduces nicks in the DNA strand. Cleaves the DNA backbone by beta-delta elimination to generate a single-strand break at the site of the removed base with both 3'- and 5'-phosphates. The protein is Formamidopyrimidine-DNA glycosylase of Salmonella agona (strain SL483).